The following is a 62-amino-acid chain: Beta-defensin 33 (62 aa).

An N-terminal signal peptide occupies residues 1–20; the sequence is MRLLFLLFLLLVCLAQKTSG. 3 disulfides stabilise this stretch: Cys-30–Cys-59, Cys-37–Cys-52, and Cys-45–Cys-60.

The protein belongs to the beta-defensin family.

Its subcellular location is the secreted. Functionally, has antibacterial activity. In Rattus norvegicus (Rat), this protein is Beta-defensin 33 (Defb33).